The primary structure comprises 214 residues: MSSESMKNKHRNSKRTPSPLQKERRRNWESHKSRSRSPIRRHGEKNLEYAHHSNQENRQSSYTALKTSDQATKTKEKTSGGNRTNPYTVFSQHRANHSDAPGWCGFYWHSTRLARDGTNCIFNEMKQEFQELQINGKITWDNARELLFSQKKKLDQKYRNMLYHFRHSPDCPRCDYWDNVYRRHLAHVSSQESEEVTDEEMLSAVESMDTNASN.

Disordered stretches follow at residues 1–87 (MSSE…TNPY) and 192–214 (ESEE…NASN). A compositionally biased stretch (basic residues) spans 33–43 (SRSRSPIRRHG). Basic and acidic residues predominate over residues 44–55 (EKNLEYAHHSNQ). A compositionally biased stretch (polar residues) spans 56–71 (ENRQSSYTALKTSDQA). A compositionally biased stretch (acidic residues) spans 192-201 (ESEEVTDEEM).

Belongs to the Bocaparvovirus Non-structural protein NP-1 family.

Its subcellular location is the host nucleus. In terms of biological role, required for the expression of the capsid proteins. Performs the splicing and internal polyadenylation of the viral capsid-encoding mRNA precursor, which allows its maturation and expression. Transactivates the viral promoter. The sequence is that of Non-structural protein NP-1 (NP1) from Human bocavirus 2 (HBoV2).